Reading from the N-terminus, the 314-residue chain is Melanoma-associated antigen 2 (314 aa).

The span at 1–20 (MPLEQRSQHCKPEEGLEARG) shows a compositional bias: basic and acidic residues. The interval 1–69 (MPLEQRSQHC…SPPHSPQGAS (69 aa)) is disordered. Low complexity predominate over residues 21 to 44 (EALGLVGAQAPATEEQQTASSSST). Ser64 carries the post-translational modification Phosphoserine. The MAGE domain occupies 109 to 308 (ISRKMVELVH…ISYPPLHERA (200 aa)).

Interacts with TRIM28 and UBE2H. Interacts with HDAC3. Interacts with PML (isoform PML-1, isoform PML-2, isoform PML-3, isoform PML-4 and isoform PML-5). In terms of tissue distribution, expressed in many tumors of several types, such as melanoma, head and neck squamous cell carcinoma, lung carcinoma and breast carcinoma, but not in normal tissues except for testes.

It localises to the nucleus. The protein localises to the PML body. In terms of biological role, reduces p53/TP53 transactivation function through recruitment of HDAC3 to p53/TP53 transcription sites. Also represses p73/TP73 activity. Proposed to enhance ubiquitin ligase activity of RING-type zinc finger-containing E3 ubiquitin-protein ligases. In vitro enhances ubiquitin ligase activity of TRIM28 and stimulates p53/TP53 ubiquitination by TRIM28 potentially in presence of Ubl-conjugating enzyme UBE2H. Proposed to act through recruitment and/or stabilization of the Ubl-conjugating enzyme (E2) at the E3:substrate complex. May play a role in embryonal development and tumor transformation or aspects of tumor progression. In vitro promotes cell viability in melanoma cell lines. Antigen recognized on a melanoma by autologous cytolytic T-lymphocytes. Negatively regulates acetylation and sumoylation of PML and represses PML-induced p53/TP53 acetylation and activation. The protein is Melanoma-associated antigen 2 (MAGEA2) of Homo sapiens (Human).